The primary structure comprises 329 residues: G-protein coupled bile acid receptor 1 (329 aa).

The Extracellular portion of the chain corresponds to 1 to 18 (MMSHNTTELSAIPRGVQE). A glycan (N-linked (GlcNAc...) asparagine) is linked at N5. A helical transmembrane segment spans residues 19–39 (LSLVLASLIVIANLLLALGIV). Over 40–49 (LDRHLRSPPA) the chain is Cytoplasmic. The chain crosses the membrane as a helical span at residues 50-70 (GCFFLSLLLAGLLTGLALPTL). The Extracellular segment spans residues 71–84 (PGLWNRSHQGYWSC). Residue N75 is glycosylated (N-linked (GlcNAc...) asparagine). A disulfide bridge links C84 with C154. A helical transmembrane segment spans residues 85-105 (LLLHLAPNFCFLSLLANLLLV). At 106–124 (HGERYMAVLQPLRPHGSVR) the chain is on the cytoplasmic side. The chain crosses the membrane as a helical span at residues 125–145 (LALFLTWISSLLFASLPALGW). Topologically, residues 146–157 (NHWSPGANCSSQ) are extracellular. An N-linked (GlcNAc...) asparagine glycan is attached at N153. The chain crosses the membrane as a helical span at residues 158–178 (AIFPAPYLYLEVYGLLLPAVG). Topologically, residues 179–229 (ATALLSVRVLATAHHQLREIRRLERAVCRDAPSTLARALTWRQARAQAGAT) are cytoplasmic. The helical transmembrane segment at 230–250 (LLFLLCWGPYVATLLLSVLAY) threads the bilayer. At 251 to 260 (ERRPPLGPVT) the chain is on the extracellular side. A helical membrane pass occupies residues 261-281 (LLSLISLGSASAAVVPVAMGL). Over 282 to 329 (GDQRYTAPWRTAAQRWLQVLRGRPKRANPGPSTAYHSSSQCSTDLDLN) the chain is Cytoplasmic. The tract at residues 306 to 329 (KRANPGPSTAYHSSSQCSTDLDLN) is disordered. The segment covering 311–329 (GPSTAYHSSSQCSTDLDLN) has biased composition (polar residues).

Belongs to the G-protein coupled receptor 1 family.

It localises to the cell membrane. Its function is as follows. Receptor for bile acid. Bile acid-binding induces its internalization, activation of extracellular signal-regulated kinase and intracellular cAMP production. May be involved in the suppression of macrophage functions by bile acids. Involved in bile acid promoted GLP1R secretion. The protein is G-protein coupled bile acid receptor 1 (Gpbar1) of Rattus norvegicus (Rat).